Consider the following 493-residue polypeptide: MEQREIILLGLAALAVTYQVIVWIYNAWFHPLSGYPGPKLFGASYLPGLYHRIRGDYVLVHTALHERFGEVIRVSPNELSYINPQAWKDITGQGSGRQDMEKDPLSFGRPMPNAPSIFNAHRMDHSRIRRTMSHAFSASALRRQESLIQSHVKMMIQCLREHNEEVVDMVSWYNFTTFDMFGDLAFGESFGCLTNSLYHPWVKMLIMSMKAGYFIIQAQKYPIFEKVLMSFIPRMMRQRRRDHLALTQAKLAKRMAKPEERPDFLSFILRHQDEATGMSLPELEINASTLIVAGSETTATLLSGCTYYLLRNPRVMEKLLNEVRTTFKSEDEIDITTVNGLKYMLAVLDEALRVYPPAPGNFHRLVPKEGSVICEKFVPGETQVSVCHYAAYHSPCNFHQPDEFIPERFLGESKFENDRRDVLQPFGTGSRACLGRNLAYFEMRLILTHVLWNFDLELMPQSKYWANQKVFAIWDKPELYVKLKPRAGLEVRA.

The helical transmembrane segment at 5 to 25 (EIILLGLAALAVTYQVIVWIY) threads the bilayer. Asparagine 174 and asparagine 286 each carry an N-linked (GlcNAc...) asparagine glycan. Heme is bound at residue cysteine 433.

Belongs to the cytochrome P450 family. Heme serves as cofactor.

It localises to the membrane. It catalyses the reaction asperterpenoid A + reduced [NADPH--hemoprotein reductase] + O2 = asperterpenoid C + oxidized [NADPH--hemoprotein reductase] + H2O + H(+). The protein operates within secondary metabolite biosynthesis; terpenoid biosynthesis. In terms of biological role, cytochrome P450 monooxygenase; part of the gene cluster that mediates the biosynthesis of the asperterpenoids, sesterterpenes that exhibit anti-tuberculosis activity. The first step of the pathway is performed by the sesterterpene synthase astC that possesses both prenyl transferase and terpene cyclase activity, converting isopentenyl diphosphate and dimethylallyl diphosphate into geranylfarnesyl diphosphate (GFPP) and further converting GFPP into preasperterpenoid A, respectively. The cytochrome P450 monooxygenase astB then dually oxidizes preasperterpenoid A to produce asperterpenoid A along with a minor product, asperterpenoid B. Finally, the cytochrome P450 monooxygenase astA converts asperterpenoid A into asperterpenoid C. This chain is Cytochrome P450 monooxygenase astA, found in Talaromyces wortmannii (Penicillium wortmannii).